A 201-amino-acid polypeptide reads, in one-letter code: MNLNLTGAEGTVEVSDVAFAREYNEALVHQVVTSYLAGARQGSRAQKTRSEVAGGGRKPWKQKGSGRARAGTIRSPLWRSGGVTFAAKPQDHSQKVNKKMYRAAMRTIWSELVRQDRLVVVEDLKLEAPKTKLFIAKMAELNIENALIVSHDLDDNLFLAARNIPNVDVRDAASIDPVSLIAYDKVLVTVGALKQVEEALA.

The disordered stretch occupies residues 39 to 67; sequence ARQGSRAQKTRSEVAGGGRKPWKQKGSGR.

This sequence belongs to the universal ribosomal protein uL4 family. In terms of assembly, part of the 50S ribosomal subunit.

One of the primary rRNA binding proteins, this protein initially binds near the 5'-end of the 23S rRNA. It is important during the early stages of 50S assembly. It makes multiple contacts with different domains of the 23S rRNA in the assembled 50S subunit and ribosome. Its function is as follows. Forms part of the polypeptide exit tunnel. This chain is Large ribosomal subunit protein uL4, found in Marinomonas sp. (strain MWYL1).